The sequence spans 118 residues: Large ribosomal subunit protein bL12 (118 aa).

N-acetylmethionine; in form MA2 is present on Met1.

Belongs to the bacterial ribosomal protein bL12 family. As to quaternary structure, homodimer. Part of the ribosomal stalk of the 50S ribosomal subunit. Forms a multimeric L10(L12)X complex, where L10 forms an elongated spine to which 2 to 4 L12 dimers bind in a sequential fashion. Binds GTP-bound translation factors. Acetylation of Met-1 converts MA1 to MA2.

Forms part of the ribosomal stalk which helps the ribosome interact with GTP-bound translation factors. Is thus essential for accurate translation. The protein is Large ribosomal subunit protein bL12 of Micrococcus luteus (Micrococcus lysodeikticus).